We begin with the raw amino-acid sequence, 405 residues long: L-carnitine CoA-transferase (405 aa).

CoA is bound by residues lysine 97 and arginine 104. Aspartate 169 acts as the Nucleophile in catalysis.

The protein belongs to the CoA-transferase III family. CaiB subfamily. Homodimer.

It is found in the cytoplasm. The catalysed reaction is crotonobetainyl-CoA + (R)-carnitine = crotonobetaine + (R)-carnitinyl-CoA. It carries out the reaction 4-(trimethylamino)butanoyl-CoA + (R)-carnitine = (R)-carnitinyl-CoA + 4-(trimethylamino)butanoate. It functions in the pathway amine and polyamine metabolism; carnitine metabolism. In terms of biological role, catalyzes the reversible transfer of the CoA moiety from gamma-butyrobetainyl-CoA to L-carnitine to generate L-carnitinyl-CoA and gamma-butyrobetaine. Is also able to catalyze the reversible transfer of the CoA moiety from gamma-butyrobetainyl-CoA or L-carnitinyl-CoA to crotonobetaine to generate crotonobetainyl-CoA. The polypeptide is L-carnitine CoA-transferase (Escherichia coli O7:K1 (strain IAI39 / ExPEC)).